A 232-amino-acid polypeptide reads, in one-letter code: Alpha N-terminal protein methyltransferase 1 (232 aa).

Residues Gly71, Arg76, 123–124 (MQ), and Gln139 each bind S-adenosyl-L-methionine.

The protein belongs to the methyltransferase superfamily. NTM1 family.

Its subcellular location is the cytoplasm. The catalysed reaction is N-terminal L-alanyl-L-prolyl-L-lysyl-[protein] + 3 S-adenosyl-L-methionine = N-terminal N,N,N-trimethyl-L-alanyl-L-prolyl-L-lysyl-[protein] + 3 S-adenosyl-L-homocysteine + 3 H(+). It carries out the reaction N-terminal L-seryl-L-prolyl-L-lysyl-[protein] + 3 S-adenosyl-L-methionine = N-terminal N,N,N-trimethyl-L-seryl-L-prolyl-L-lysyl-[protein] + 3 S-adenosyl-L-homocysteine + 3 H(+). It catalyses the reaction N-terminal L-prolyl-L-prolyl-L-lysyl-[protein] + 2 S-adenosyl-L-methionine = N-terminal N,N-dimethyl-L-prolyl-L-prolyl-L-lysyl-[protein] + 2 S-adenosyl-L-homocysteine + 2 H(+). Its function is as follows. Alpha-N-methyltransferase that methylates the N-terminus of target proteins containing the N-terminal motif [Ala/Pro/Ser]-Pro-Lys when the initiator Met is cleaved. Specifically catalyzes mono-, di- or tri-methylation of exposed alpha-amino group of Ala or Ser residue in the [Ala/Ser]-Pro-Lys motif and mono- or di-methylation of Pro in the Pro-Pro-Lys motif. Responsible for the N-terminal methylation of the ribosomal proteins RPL12A, RPL12B, RPS25A and RPS25B. The sequence is that of Alpha N-terminal protein methyltransferase 1 (TAE1) from Saccharomyces cerevisiae (strain ATCC 204508 / S288c) (Baker's yeast).